The sequence spans 141 residues: ATP synthase epsilon chain (141 aa).

Belongs to the ATPase epsilon chain family. F-type ATPases have 2 components, CF(1) - the catalytic core - and CF(0) - the membrane proton channel. CF(1) has five subunits: alpha(3), beta(3), gamma(1), delta(1), epsilon(1). CF(0) has three main subunits: a, b and c.

It localises to the cell inner membrane. In terms of biological role, produces ATP from ADP in the presence of a proton gradient across the membrane. The polypeptide is ATP synthase epsilon chain (Halorhodospira halophila (strain DSM 244 / SL1) (Ectothiorhodospira halophila (strain DSM 244 / SL1))).